Reading from the N-terminus, the 526-residue chain is 1,4-beta-D-glucan cellobiohydrolase B (526 aa).

An N-terminal signal peptide occupies residues 1-23 (MASSFQLYKALLFFSSLLSAVQA). The interval 24–458 (QKVGTQQAEV…SNIKFGPIGS (435 aa)) is catalytic. Glu-235 acts as the Nucleophile in catalysis. Glu-240 (proton donor) is an active-site residue. 2 N-linked (GlcNAc...) asparagine glycosylation sites follow: Asn-293 and Asn-400. Residues 459–490 (TFGNGGGSGPTTTVTTSTATSTTSSATSTATG) form a ser/Thr-rich linker region. A disordered region spans residues 464 to 488 (GGSGPTTTVTTSTATSTTSSATSTA). The span at 468 to 488 (PTTTVTTSTATSTTSSATSTA) shows a compositional bias: low complexity. The CBM1 domain maps to 490–526 (GQAQHWEQCGGNGWTGPTVCASPWACTVVNSWYSQCL). 2 disulfides stabilise this stretch: Cys-498–Cys-515 and Cys-509–Cys-525.

It belongs to the glycosyl hydrolase 7 (cellulase C) family.

It localises to the secreted. The enzyme catalyses Hydrolysis of (1-&gt;4)-beta-D-glucosidic linkages in cellulose and cellotetraose, releasing cellobiose from the non-reducing ends of the chains.. Functionally, the biological conversion of cellulose to glucose generally requires three types of hydrolytic enzymes: (1) Endoglucanases which cut internal beta-1,4-glucosidic bonds; (2) Exocellobiohydrolases that cut the disaccharide cellobiose from the non-reducing end of the cellulose polymer chain; (3) Beta-1,4-glucosidases which hydrolyze the cellobiose and other short cello-oligosaccharides to glucose. The sequence is that of 1,4-beta-D-glucan cellobiohydrolase B (cbhB) from Emericella nidulans (strain FGSC A4 / ATCC 38163 / CBS 112.46 / NRRL 194 / M139) (Aspergillus nidulans).